We begin with the raw amino-acid sequence, 131 residues long: Phosphoribosyl-AMP cyclohydrolase (131 aa).

Position 78 (D78) interacts with Mg(2+). Residue C79 coordinates Zn(2+). D80 and D82 together coordinate Mg(2+). Residues C96 and C103 each contribute to the Zn(2+) site.

Belongs to the PRA-CH family. In terms of assembly, homodimer. Mg(2+) serves as cofactor. The cofactor is Zn(2+).

Its subcellular location is the cytoplasm. The catalysed reaction is 1-(5-phospho-beta-D-ribosyl)-5'-AMP + H2O = 1-(5-phospho-beta-D-ribosyl)-5-[(5-phospho-beta-D-ribosylamino)methylideneamino]imidazole-4-carboxamide. Its pathway is amino-acid biosynthesis; L-histidine biosynthesis; L-histidine from 5-phospho-alpha-D-ribose 1-diphosphate: step 3/9. In terms of biological role, catalyzes the hydrolysis of the adenine ring of phosphoribosyl-AMP. The sequence is that of Phosphoribosyl-AMP cyclohydrolase from Neisseria gonorrhoeae (strain ATCC 700825 / FA 1090).